Here is a 428-residue protein sequence, read N- to C-terminus: Histidine--tRNA ligase (428 aa).

This sequence belongs to the class-II aminoacyl-tRNA synthetase family. As to quaternary structure, homodimer.

The protein resides in the cytoplasm. The catalysed reaction is tRNA(His) + L-histidine + ATP = L-histidyl-tRNA(His) + AMP + diphosphate + H(+). The sequence is that of Histidine--tRNA ligase from Mesomycoplasma hyopneumoniae (strain 7448) (Mycoplasma hyopneumoniae).